Reading from the N-terminus, the 467-residue chain is MSIGNIVQCIGAVVDIEFPRNAMPKVYDALVLEDSSETSFAEKGLTFEVQQQLGDGVVRTIALGSSDGLRRGMAVKNTEAPISVPVGQGTLGRIMDVLGRPIDEAGPIASDERRAIHQKAPKFDELSPSTDLLETGIKVIDLICPFAKGGKVGLFGGAGVGKTVNMMELINNIAKQHSGLSVFAGVGERTREGNDFYHEMKDSNVLDKVAMVFGQMNEPPGNRLRVALSGLTMAEKFRDEGRDILFFVDNIYRYTLAGTEVSALLGRMPSAVGYQPTLAEEMGKLQERITSTKTGSITSIQAVYVPADDLTDPSPATTFLHLDSTLVLSRDIAALGIYPAVDPLDSTSRQMDPQVVGQEHYNVARAVQQTLQRYKELRDIIAILGMDELSPEDKMAVNRARKIQRFLSQPFHVAEVFTGSPGKYVPLKETIRGFKMLVDGECDHLPEQAFYMVGSIDEAFEKAKKLQ.

An ATP-binding site is contributed by 156-163 (GGAGVGKT).

It belongs to the ATPase alpha/beta chains family. In terms of assembly, F-type ATPases have 2 components, CF(1) - the catalytic core - and CF(0) - the membrane proton channel. CF(1) has five subunits: alpha(3), beta(3), gamma(1), delta(1), epsilon(1). CF(0) has three main subunits: a(1), b(2) and c(9-12). The alpha and beta chains form an alternating ring which encloses part of the gamma chain. CF(1) is attached to CF(0) by a central stalk formed by the gamma and epsilon chains, while a peripheral stalk is formed by the delta and b chains.

The protein resides in the cell inner membrane. It catalyses the reaction ATP + H2O + 4 H(+)(in) = ADP + phosphate + 5 H(+)(out). In terms of biological role, produces ATP from ADP in the presence of a proton gradient across the membrane. The catalytic sites are hosted primarily by the beta subunits. The polypeptide is ATP synthase subunit beta (Cupriavidus pinatubonensis (strain JMP 134 / LMG 1197) (Cupriavidus necator (strain JMP 134))).